Reading from the N-terminus, the 464-residue chain is ATP synthase subunit beta (464 aa).

152–159 (GGAGVGKS) contacts ATP.

Belongs to the ATPase alpha/beta chains family. In terms of assembly, F-type ATPases have 2 components, CF(1) - the catalytic core - and CF(0) - the membrane proton channel. CF(1) has five subunits: alpha(3), beta(3), gamma(1), delta(1), epsilon(1). CF(0) has three main subunits: a(1), b(2) and c(9-12). The alpha and beta chains form an alternating ring which encloses part of the gamma chain. CF(1) is attached to CF(0) by a central stalk formed by the gamma and epsilon chains, while a peripheral stalk is formed by the delta and b chains.

The protein localises to the cell membrane. The enzyme catalyses ATP + H2O + 4 H(+)(in) = ADP + phosphate + 5 H(+)(out). Produces ATP from ADP in the presence of a proton gradient across the membrane. The catalytic sites are hosted primarily by the beta subunits. The sequence is that of ATP synthase subunit beta from Protochlamydia amoebophila (strain UWE25).